The sequence spans 329 residues: Acetyl-coenzyme A carboxylase carboxyl transferase subunit alpha (329 aa).

The CoA carboxyltransferase C-terminal domain maps to 40-294; it reads QLETLAARRR…REAIERHLDE (255 aa).

The protein belongs to the AccA family. In terms of assembly, acetyl-CoA carboxylase is a heterohexamer composed of biotin carboxyl carrier protein (AccB), biotin carboxylase (AccC) and two subunits each of ACCase subunit alpha (AccA) and ACCase subunit beta (AccD).

The protein localises to the cytoplasm. The enzyme catalyses N(6)-carboxybiotinyl-L-lysyl-[protein] + acetyl-CoA = N(6)-biotinyl-L-lysyl-[protein] + malonyl-CoA. It participates in lipid metabolism; malonyl-CoA biosynthesis; malonyl-CoA from acetyl-CoA: step 1/1. Component of the acetyl coenzyme A carboxylase (ACC) complex. First, biotin carboxylase catalyzes the carboxylation of biotin on its carrier protein (BCCP) and then the CO(2) group is transferred by the carboxyltransferase to acetyl-CoA to form malonyl-CoA. The protein is Acetyl-coenzyme A carboxylase carboxyl transferase subunit alpha of Prochlorococcus marinus (strain MIT 9313).